The sequence spans 199 residues: Urease accessory protein UreG (199 aa).

8-15 (GPVGSGKT) provides a ligand contact to GTP.

It belongs to the SIMIBI class G3E GTPase family. UreG subfamily. Homodimer. UreH, UreF and UreG form a complex that acts as a GTP-hydrolysis-dependent molecular chaperone, activating the urease apoprotein by helping to assemble the nickel containing metallocenter of UreC. The UreE protein probably delivers the nickel.

The protein localises to the cytoplasm. Functionally, facilitates the functional incorporation of the urease nickel metallocenter. This process requires GTP hydrolysis, probably effectuated by UreG. This chain is Urease accessory protein UreG, found in Helicobacter pylori (strain J99 / ATCC 700824) (Campylobacter pylori J99).